A 405-amino-acid chain; its full sequence is MASATFSVAKPAIKANGKGFSEFSGLRNSSRHLPFSRKSSDDFHSLVTFQTNAVGSSGGHKKSLVVEAKQLKVAINGFGRIGRNFLRCWHGRKDSPLDVIAINDTGGVKQASHLLKYDSTLGIFDADVKPVGTDGISVDGKVIKVVSDRNPANLPWKELGIDLVIEGTGVFVDREGAGRHITAGAKKVLITAPGKGDIPTYVVGVNADAYTHADDIISNASCTTNCLAPFVKVLDQKFGIIKGTMTTTHSYTGDQRLLDASHRDLRRARAAALNIVPTSTGAAKAVALVLPTLKGKLNGIALRVPTPNVSVVDLVVQVSKKTFAEEVNEAFRESAAKELTGILSVCDEPLVSVDFRCTDVSSTVDSSLTMVMGDDLVKVIAWYDNEWGYSQRVVDLADIVANNWK.

The transit peptide at 1–68 directs the protein to the chloroplast; that stretch reads MASATFSVAK…GHKKSLVVEA (68 aa). NADP(+)-binding positions include 80-81, aspartate 104, and arginine 149; that span reads RI. D-glyceraldehyde 3-phosphate contacts are provided by residues 221–223, threonine 252, arginine 267, 280–281, and arginine 303; these read SCT and TG. The active-site Nucleophile is cysteine 222. Position 385 (asparagine 385) interacts with NADP(+).

It belongs to the glyceraldehyde-3-phosphate dehydrogenase family. As to quaternary structure, tetramer of either four A chains (GAPDH 2) or two A and two B chains (GAPDH 1).

The protein localises to the plastid. The protein resides in the chloroplast. The enzyme catalyses D-glyceraldehyde 3-phosphate + phosphate + NADP(+) = (2R)-3-phospho-glyceroyl phosphate + NADPH + H(+). The protein operates within carbohydrate biosynthesis; Calvin cycle. This is Glyceraldehyde-3-phosphate dehydrogenase A, chloroplastic (GAPA) from Pisum sativum (Garden pea).